A 36-amino-acid chain; its full sequence is Collagen alpha-2(I) chain (36 aa).

Positions 1-36 are disordered; sequence GSNGEPGSAGPPGPAGLRGLPGESGAVGPAGPPGSR. A 4-hydroxyproline mark is found at Pro-6 and Pro-12. Residues 15–29 are compositionally biased toward low complexity; it reads AGLRGLPGESGAVGP. 4-hydroxyproline is present on Pro-33.

The protein belongs to the fibrillar collagen family. As to quaternary structure, trimers of one alpha 2(I) and two alpha 1(I) chains. Proline residues at the third position of the tripeptide repeating unit (G-X-Y) are hydroxylated in some or all of the chains.

The protein resides in the secreted. It localises to the extracellular space. It is found in the extracellular matrix. Its function is as follows. Type I collagen is a member of group I collagen (fibrillar forming collagen). The polypeptide is Collagen alpha-2(I) chain (Brachylophosaurus canadensis (Campanian hadrosaur)).